The sequence spans 201 residues: Large ribosomal subunit protein uL4 (201 aa).

The segment at 42–67 (GNSAQKTRSEVSGGGKKPWNQKGTGR) is disordered.

The protein belongs to the universal ribosomal protein uL4 family. In terms of assembly, part of the 50S ribosomal subunit.

One of the primary rRNA binding proteins, this protein initially binds near the 5'-end of the 23S rRNA. It is important during the early stages of 50S assembly. It makes multiple contacts with different domains of the 23S rRNA in the assembled 50S subunit and ribosome. In terms of biological role, forms part of the polypeptide exit tunnel. This is Large ribosomal subunit protein uL4 from Legionella pneumophila (strain Lens).